A 129-amino-acid polypeptide reads, in one-letter code: Lysozyme C (129 aa).

Residues 1–129 (KVYGRCELAA…VNAWIRGCRL (129 aa)) form the C-type lysozyme domain. Cystine bridges form between Cys-6/Cys-127, Cys-30/Cys-115, Cys-64/Cys-80, and Cys-76/Cys-94. Residues Glu-35 and Asp-52 contribute to the active site.

It belongs to the glycosyl hydrolase 22 family. As to quaternary structure, monomer.

It localises to the secreted. The enzyme catalyses Hydrolysis of (1-&gt;4)-beta-linkages between N-acetylmuramic acid and N-acetyl-D-glucosamine residues in a peptidoglycan and between N-acetyl-D-glucosamine residues in chitodextrins.. Functionally, lysozymes have primarily a bacteriolytic function; those in tissues and body fluids are associated with the monocyte-macrophage system and enhance the activity of immunoagents. The sequence is that of Lysozyme C (LYZ) from Syrmaticus reevesii (Reeves's pheasant).